A 505-amino-acid polypeptide reads, in one-letter code: Olfactomedin-4 (505 aa).

Residues Met-1–Ala-18 form the signal peptide. Residues Asn-64 and Asn-128 are each glycosylated (N-linked (GlcNAc...) asparagine). Residues His-174–Leu-225 adopt a coiled-coil conformation. The region spanning Ser-237–Gln-499 is the Olfactomedin-like domain. An intrachain disulfide couples Cys-238 to Cys-429.

As to quaternary structure, homomultimer; disulfide-linked. Interacts with NDUFA13. Interacts with cell surface lectins (locutions ricinus communis agglutinin I, concanavalin A and wheat germ agglutinin) and cadherin. N-glycosylated.

The protein resides in the secreted. The protein localises to the extracellular space. Its subcellular location is the mitochondrion. May promote proliferation of pancreatic cancer cells by favoring the transition from the S to G2/M phase. In myeloid leukemic cell lines, inhibits cell growth and induces cell differentiation and apoptosis. May play a role in the inhibition of EIF4EBP1 phosphorylation/deactivation. Facilitates cell adhesion, most probably through interaction with cell surface lectins and cadherin. This is Olfactomedin-4 (Olfm4) from Mus musculus (Mouse).